Reading from the N-terminus, the 373-residue chain is uncharacterized protein (373 aa).

A helical membrane pass occupies residues 180–202 (YYVVALGTLALGSILGYTAKYVW).

It is found in the membrane. This is an uncharacterized protein from Rickettsia prowazekii (strain Madrid E).